Reading from the N-terminus, the 529-residue chain is Ell-associated factor Eaf (529 aa).

Disordered regions lie at residues 155 to 235 (AAGS…PMIT) and 253 to 529 (ANIS…DDDD). Residues 167–186 (ENSTMRISSKTKVSTGSRRN) show a composition bias toward polar residues. Composition is skewed to low complexity over residues 194–215 (RNSP…SPQS), 256–265 (SGSSTGSSSG), 306–315 (HQNQQQQQQN), and 327–346 (QQQH…QQQQ). Ser196 is subject to Phosphoserine. Over residues 347-359 (RASFSHSNHSNSM) the composition is skewed to polar residues. Residues 401–416 (DSSDTDSGSDSDDSTD) are compositionally biased toward acidic residues. Composition is skewed to low complexity over residues 431–451 (HQQQ…HMHQ), 469–480 (QHQQQQQQPPQQ), 488–499 (QQQQQQQQQQQS), and 510–523 (NDLL…SSNS).

It belongs to the EAF family.

It localises to the nucleus. In terms of biological role, promotes transcriptional elongation by Su(Tpl)/ELL. Essential for development. This chain is Ell-associated factor Eaf, found in Drosophila grimshawi (Hawaiian fruit fly).